The chain runs to 327 residues: Polyadenylate-binding protein-interacting protein 9 (327 aa).

The PAM2-like signature appears at 59–69; that stretch reads KLNPLAKEFFP. A compositionally biased stretch (basic and acidic residues) spans 97 to 113; sequence KQSGEEFDLDAKKDDNT. The interval 97–132 is disordered; it reads KQSGEEFDLDAKKDDNTRKRRNYSQGRRRLTGRISK. A Bipartite nuclear localization signal motif is present at residues 114-125; the sequence is RKRRNYSQGRRR. Basic residues predominate over residues 114–127; sequence RKRRNYSQGRRRLT. RRM domains are found at residues 141-216 and 238-314; these read RTVY…PSKT and RTIY…PSKT. A disordered region spans residues 308–327; it reads RVSPSKTPVRPRITRPPSTN.

It localises to the nucleus. The sequence is that of Polyadenylate-binding protein-interacting protein 9 (CID9) from Arabidopsis thaliana (Mouse-ear cress).